A 673-amino-acid polypeptide reads, in one-letter code: UvrABC system protein B (673 aa).

Residues 26 to 414 enclose the Helicase ATP-binding domain; it reads EGLEDGLAHQ…GGDVVDQVVR (389 aa). Position 39–46 (39–46) interacts with ATP; it reads GVTGSGKT. The short motif at 92–115 is the Beta-hairpin element; it reads YYDYYQPEAYVPSSDTFIEKDASV. Positions 431 to 597 constitute a Helicase C-terminal domain; sequence QVDDLLSEIR…GLNKKVVDIL (167 aa). A UVR domain is found at 633–668; sequence LQKIHELEGLMMQHAQNLEFEEAAQIRDQLHQLREL.

The protein belongs to the UvrB family. In terms of assembly, forms a heterotetramer with UvrA during the search for lesions. Interacts with UvrC in an incision complex.

The protein resides in the cytoplasm. The UvrABC repair system catalyzes the recognition and processing of DNA lesions. A damage recognition complex composed of 2 UvrA and 2 UvrB subunits scans DNA for abnormalities. Upon binding of the UvrA(2)B(2) complex to a putative damaged site, the DNA wraps around one UvrB monomer. DNA wrap is dependent on ATP binding by UvrB and probably causes local melting of the DNA helix, facilitating insertion of UvrB beta-hairpin between the DNA strands. Then UvrB probes one DNA strand for the presence of a lesion. If a lesion is found the UvrA subunits dissociate and the UvrB-DNA preincision complex is formed. This complex is subsequently bound by UvrC and the second UvrB is released. If no lesion is found, the DNA wraps around the other UvrB subunit that will check the other stand for damage. The protein is UvrABC system protein B of Shigella dysenteriae serotype 1 (strain Sd197).